The following is a 342-amino-acid chain: Ribosomal RNA small subunit methyltransferase C (342 aa).

Belongs to the methyltransferase superfamily. RsmC family. Monomer.

The protein resides in the cytoplasm. The enzyme catalyses guanosine(1207) in 16S rRNA + S-adenosyl-L-methionine = N(2)-methylguanosine(1207) in 16S rRNA + S-adenosyl-L-homocysteine + H(+). Functionally, specifically methylates the guanine in position 1207 of 16S rRNA in the 30S particle. The chain is Ribosomal RNA small subunit methyltransferase C from Salmonella newport (strain SL254).